Consider the following 143-residue polypeptide: Glutaredoxin-2 (143 aa).

Residues Met-1–Leu-30 constitute a mitochondrion transit peptide. Ser-37 carries the post-translational modification Phosphoserine. Positions Val-41 to Gln-143 constitute a Glutaredoxin domain. Lys-58 to Tyr-63 lines the glutathione pocket. Residue Cys-61 is modified to S-glutathionyl cysteine; alternate. A disulfide bridge connects residues Cys-61 and Cys-64. Position 91 is a phosphoserine (Ser-91). Glutathione is bound by residues Val-109 and Asn-122–Ser-123.

It belongs to the glutaredoxin family.

It localises to the cytoplasm. The protein resides in the mitochondrion. It catalyses the reaction 2 glutathione + H2O2 = glutathione disulfide + 2 H2O. It carries out the reaction 1-chloro-2,4-dinitrobenzene + glutathione = 2,4-dinitrophenyl-S-glutathione + chloride + H(+). The catalysed reaction is RX + glutathione = an S-substituted glutathione + a halide anion + H(+). Component of the glutathione system which performs several activities such as glutathione-dependent oxidoreductase, glutathione peroxidase and glutathione S-transferase (GST) activity. The disulfide bond functions as an electron carrier in the glutathione-dependent synthesis of deoxyribonucleotides by the enzyme ribonucleotide reductase. In addition, it is also involved in reducing cytosolic protein- and non-protein-disulfides in a coupled system with glutathione reductase. Required for resistance to reactive oxygen species (ROS) by directly reducing hydroperoxides and for the detoxification of ROS-mediated damage. GRX2 is more active as an oxidoreductase than GRX1. Responsible for the S-glutathionylation of DHBP synthase. This chain is Glutaredoxin-2 (GRX2), found in Saccharomyces cerevisiae (strain ATCC 204508 / S288c) (Baker's yeast).